Reading from the N-terminus, the 365-residue chain is MIILGIETSCDETAAAVVRDGRFVLSNIIRSQVDLHQRYGGVVPELASRRHVTSIVPVLDLALEQAGIGPSAIDAIAVTEGPGLAGSLLVGINVAKTLAFVWEKPLIPVNHLEGHIYANWLTLPGQDEVPEPTFPLVCLIVSGGHTELVLMRGHGDYVLLGRTLDDAAGEAFDKAARLLGLGFPGGPAIQKAAEQGRPGRFSLPRAWLGESYDFSFSGLKTALLRVLEQYQRRPARRVAAGQPFPEYVAPEYGPSVPIADLAAEFQAAVVEVLAEKTARAAREFGATMVLLAGGVAANAALRQRLREISPVPVRYPPPILCTDNAAMIAGAAYYLAQRGVRADLDLDVHAHLPLVTRTLLRAGEA.

Residues H111 and H115 each coordinate Fe cation. Residues 140–144 (IVSGG), D173, G186, and N298 contribute to the substrate site. Fe cation is bound at residue D323.

Belongs to the KAE1 / TsaD family. Fe(2+) serves as cofactor.

The protein localises to the cytoplasm. The catalysed reaction is L-threonylcarbamoyladenylate + adenosine(37) in tRNA = N(6)-L-threonylcarbamoyladenosine(37) in tRNA + AMP + H(+). Functionally, required for the formation of a threonylcarbamoyl group on adenosine at position 37 (t(6)A37) in tRNAs that read codons beginning with adenine. Is involved in the transfer of the threonylcarbamoyl moiety of threonylcarbamoyl-AMP (TC-AMP) to the N6 group of A37, together with TsaE and TsaB. TsaD likely plays a direct catalytic role in this reaction. The protein is tRNA N6-adenosine threonylcarbamoyltransferase of Thermomicrobium roseum (strain ATCC 27502 / DSM 5159 / P-2).